The chain runs to 236 residues: Purine nucleoside phosphorylase DeoD-type (236 aa).

H5 serves as a coordination point for a purine D-ribonucleoside. Phosphate contacts are provided by residues G21, R25, R44, and 88–91; that span reads RVGT. A purine D-ribonucleoside contacts are provided by residues 180 to 182 and 204 to 205; these read EME and SD. D205 acts as the Proton donor in catalysis.

The protein belongs to the PNP/UDP phosphorylase family. In terms of assembly, homohexamer; trimer of homodimers.

It carries out the reaction a purine D-ribonucleoside + phosphate = a purine nucleobase + alpha-D-ribose 1-phosphate. The catalysed reaction is a purine 2'-deoxy-D-ribonucleoside + phosphate = a purine nucleobase + 2-deoxy-alpha-D-ribose 1-phosphate. In terms of biological role, catalyzes the reversible phosphorolytic breakdown of the N-glycosidic bond in the beta-(deoxy)ribonucleoside molecules, with the formation of the corresponding free purine bases and pentose-1-phosphate. The protein is Purine nucleoside phosphorylase DeoD-type of Shewanella amazonensis (strain ATCC BAA-1098 / SB2B).